Here is a 506-residue protein sequence, read N- to C-terminus: Bifunctional purine biosynthesis protein PurH (506 aa).

An MGS-like domain is found at 1 to 146 (MARLALLSVS…KNFAHLTVLC (146 aa)).

This sequence belongs to the PurH family.

It carries out the reaction (6R)-10-formyltetrahydrofolate + 5-amino-1-(5-phospho-beta-D-ribosyl)imidazole-4-carboxamide = 5-formamido-1-(5-phospho-D-ribosyl)imidazole-4-carboxamide + (6S)-5,6,7,8-tetrahydrofolate. It catalyses the reaction IMP + H2O = 5-formamido-1-(5-phospho-D-ribosyl)imidazole-4-carboxamide. It participates in purine metabolism; IMP biosynthesis via de novo pathway; 5-formamido-1-(5-phospho-D-ribosyl)imidazole-4-carboxamide from 5-amino-1-(5-phospho-D-ribosyl)imidazole-4-carboxamide (10-formyl THF route): step 1/1. Its pathway is purine metabolism; IMP biosynthesis via de novo pathway; IMP from 5-formamido-1-(5-phospho-D-ribosyl)imidazole-4-carboxamide: step 1/1. In Trichormus variabilis (strain ATCC 29413 / PCC 7937) (Anabaena variabilis), this protein is Bifunctional purine biosynthesis protein PurH.